A 314-amino-acid polypeptide reads, in one-letter code: Beta-ketoacyl-[acyl-carrier-protein] synthase III (314 aa).

Active-site residues include Cys112 and His241. The tract at residues 242 to 246 (QANIR) is ACP-binding. Residue Asn271 is part of the active site.

This sequence belongs to the thiolase-like superfamily. FabH family. In terms of assembly, homodimer.

It is found in the cytoplasm. It catalyses the reaction malonyl-[ACP] + acetyl-CoA + H(+) = 3-oxobutanoyl-[ACP] + CO2 + CoA. Its pathway is lipid metabolism; fatty acid biosynthesis. Functionally, catalyzes the condensation reaction of fatty acid synthesis by the addition to an acyl acceptor of two carbons from malonyl-ACP. Catalyzes the first condensation reaction which initiates fatty acid synthesis and may therefore play a role in governing the total rate of fatty acid production. Possesses both acetoacetyl-ACP synthase and acetyl transacylase activities. Its substrate specificity determines the biosynthesis of branched-chain and/or straight-chain of fatty acids. This Vesicomyosocius okutanii subsp. Calyptogena okutanii (strain HA) protein is Beta-ketoacyl-[acyl-carrier-protein] synthase III.